The primary structure comprises 131 residues: Small ribosomal subunit protein uS9 (131 aa).

It belongs to the universal ribosomal protein uS9 family.

The polypeptide is Small ribosomal subunit protein uS9 (Glaesserella parasuis serovar 5 (strain SH0165) (Haemophilus parasuis)).